A 212-amino-acid polypeptide reads, in one-letter code: Large ribosomal subunit protein uL3 (212 aa).

The interval 136 to 155 (THGNSLSHRSNGSIGQNQTP) is disordered. Gln-153 carries the N5-methylglutamine modification.

It belongs to the universal ribosomal protein uL3 family. In terms of assembly, part of the 50S ribosomal subunit. Forms a cluster with proteins L14 and L19. Methylated by PrmB.

Functionally, one of the primary rRNA binding proteins, it binds directly near the 3'-end of the 23S rRNA, where it nucleates assembly of the 50S subunit. In Shewanella baltica (strain OS223), this protein is Large ribosomal subunit protein uL3.